A 179-amino-acid polypeptide reads, in one-letter code: Large ribosomal subunit protein uL5 (179 aa).

It belongs to the universal ribosomal protein uL5 family. Part of the 50S ribosomal subunit; part of the 5S rRNA/L5/L18/L25 subcomplex. Contacts the 5S rRNA and the P site tRNA. Forms a bridge to the 30S subunit in the 70S ribosome.

Its function is as follows. This is one of the proteins that bind and probably mediate the attachment of the 5S RNA into the large ribosomal subunit, where it forms part of the central protuberance. In the 70S ribosome it contacts protein S13 of the 30S subunit (bridge B1b), connecting the 2 subunits; this bridge is implicated in subunit movement. Contacts the P site tRNA; the 5S rRNA and some of its associated proteins might help stabilize positioning of ribosome-bound tRNAs. This Maridesulfovibrio salexigens (strain ATCC 14822 / DSM 2638 / NCIMB 8403 / VKM B-1763) (Desulfovibrio salexigens) protein is Large ribosomal subunit protein uL5.